Here is a 445-residue protein sequence, read N- to C-terminus: Phosphoglucosamine mutase (445 aa).

Ser-99 functions as the Phosphoserine intermediate in the catalytic mechanism. Residues Ser-99, Asp-242, Asp-244, and Asp-246 each contribute to the Mg(2+) site. Phosphoserine is present on Ser-99.

It belongs to the phosphohexose mutase family. Requires Mg(2+) as cofactor. Activated by phosphorylation.

It catalyses the reaction alpha-D-glucosamine 1-phosphate = D-glucosamine 6-phosphate. Catalyzes the conversion of glucosamine-6-phosphate to glucosamine-1-phosphate. The polypeptide is Phosphoglucosamine mutase (Nitratiruptor sp. (strain SB155-2)).